The chain runs to 1085 residues: Toxin VasX (1085 aa).

Residues 1–20 (MSNPNQAAKTGQTNDAQNPA) form a disordered region. Transmembrane regions (helical) follow at residues 753 to 773 (ALGE…AISA), 813 to 833 (IALV…ESWG), 860 to 880 (IIFY…PSIA), and 884 to 904 (AGWM…GVIL).

It is found in the secreted. The protein resides in the host membrane. Functionally, toxin secreted by the type VI (T6SS) secretion system that acts on prokaryotic target cells. Acts in conjunction with VasW, an accessory protein to VasX, to compromise the inner membrane of prokaryotic target cells. The sequence is that of Toxin VasX from Vibrio cholerae serotype O1 (strain ATCC 39315 / El Tor Inaba N16961).